Here is a 119-residue protein sequence, read N- to C-terminus: Small ribosomal subunit protein bS16 (119 aa).

Belongs to the bacterial ribosomal protein bS16 family.

The chain is Small ribosomal subunit protein bS16 from Chlamydia felis (strain Fe/C-56) (Chlamydophila felis).